The following is a 218-amino-acid chain: Zinc finger BED domain-containing protein 2 (218 aa).

The segment covering Met1–Gly11 has biased composition (acidic residues). The interval Met1–Glu24 is disordered. The BED-type zinc-finger motif lies at Thr52–Ser113. Zn(2+) contacts are provided by Cys78, Cys81, His101, and His106. The disordered stretch occupies residues Ser104–Gly137. Positions Met105–Gly114 are enriched in basic and acidic residues.

In terms of tissue distribution, expressed in keratinocytes.

It is found in the nucleus. Transcriptional regulator which has intrinsic repressor activity and which competes with the transcriptional activator IRF1 for binding to the 5'-[CA]GAA[AC]C[CT]-3' consensus sequence in gene promoters. May thereby play a role in keratinocyte differentiation. This Homo sapiens (Human) protein is Zinc finger BED domain-containing protein 2 (ZBED2).